The primary structure comprises 234 residues: Orotidine 5'-phosphate decarboxylase (234 aa).

Substrate-binding positions include Asp14, Lys36, 63–72, Thr123, Arg184, Gln193, Gly213, and Arg214; that span reads DLKFHDIPNT. The active-site Proton donor is Lys65.

The protein belongs to the OMP decarboxylase family. Type 1 subfamily. As to quaternary structure, homodimer.

It carries out the reaction orotidine 5'-phosphate + H(+) = UMP + CO2. The protein operates within pyrimidine metabolism; UMP biosynthesis via de novo pathway; UMP from orotate: step 2/2. Its function is as follows. Catalyzes the decarboxylation of orotidine 5'-monophosphate (OMP) to uridine 5'-monophosphate (UMP). This is Orotidine 5'-phosphate decarboxylase from Psychromonas ingrahamii (strain DSM 17664 / CCUG 51855 / 37).